The primary structure comprises 259 residues: Undecaprenyl-diphosphatase 4 (259 aa).

The next 8 membrane-spanning stretches (helical) occupy residues 1–21 (MNWL…FLPI), 39–59 (AGLF…FIYY), 71–91 (FSKL…IGLL), 99–119 (ISKT…FLYM), 133–153 (ITYK…FPAI), 173–193 (AAYF…ILQF), 208–228 (SLIV…SWMI), and 239–259 (FAYY…THVF).

This sequence belongs to the UppP family.

Its subcellular location is the cell membrane. The enzyme catalyses di-trans,octa-cis-undecaprenyl diphosphate + H2O = di-trans,octa-cis-undecaprenyl phosphate + phosphate + H(+). In terms of biological role, catalyzes the dephosphorylation of undecaprenyl diphosphate (UPP). Confers resistance to bacitracin. This Bacillus thuringiensis (strain Al Hakam) protein is Undecaprenyl-diphosphatase 4.